The chain runs to 130 residues: MPRVKRGTHRRASRKKVLARASGYFLTKSKLYRAAMEAVDRGLKFAYVGRKRKKRDYRRLWIVRINASCRAAGLSYSKFVHGLKAAGLDLNRKVLADVALHDDAAFRNLAELAKSALAVKESARLALEKE.

It belongs to the bacterial ribosomal protein bL20 family.

Binds directly to 23S ribosomal RNA and is necessary for the in vitro assembly process of the 50S ribosomal subunit. It is not involved in the protein synthesizing functions of that subunit. This Solibacter usitatus (strain Ellin6076) protein is Large ribosomal subunit protein bL20.